The sequence spans 64 residues: DNA gyrase inhibitor YacG (64 aa).

Positions 10, 13, 29, and 33 each coordinate Zn(2+).

Belongs to the DNA gyrase inhibitor YacG family. As to quaternary structure, interacts with GyrB. Zn(2+) serves as cofactor.

In terms of biological role, inhibits all the catalytic activities of DNA gyrase by preventing its interaction with DNA. Acts by binding directly to the C-terminal domain of GyrB, which probably disrupts DNA binding by the gyrase. The sequence is that of DNA gyrase inhibitor YacG from Pectobacterium atrosepticum (strain SCRI 1043 / ATCC BAA-672) (Erwinia carotovora subsp. atroseptica).